Here is an 88-residue protein sequence, read N- to C-terminus: UPF0297 protein BcerKBAB4_4234 (88 aa).

Belongs to the UPF0297 family.

This is UPF0297 protein BcerKBAB4_4234 from Bacillus mycoides (strain KBAB4) (Bacillus weihenstephanensis).